A 447-amino-acid chain; its full sequence is Cysteine--tRNA ligase (447 aa).

Cys-28 is a binding site for Zn(2+). Positions 30–40 (PTVYNYIHIGN) match the 'HIGH' region motif. Zn(2+) is bound by residues Cys-211, His-236, and Glu-240. Positions 268–272 (KMSKS) match the 'KMSKS' region motif. Lys-271 lines the ATP pocket.

Belongs to the class-I aminoacyl-tRNA synthetase family. As to quaternary structure, monomer. The cofactor is Zn(2+).

It is found in the cytoplasm. It carries out the reaction tRNA(Cys) + L-cysteine + ATP = L-cysteinyl-tRNA(Cys) + AMP + diphosphate. The chain is Cysteine--tRNA ligase from Streptococcus agalactiae serotype V (strain ATCC BAA-611 / 2603 V/R).